The sequence spans 158 residues: Ribosome-binding factor A (158 aa).

Positions 114–158 (AKDAEVRQVSTGAQYAGDADPYRKPEDEDEETDGSSEKNEGPASA) are disordered. Residues 148-158 (SSEKNEGPASA) show a composition bias toward basic and acidic residues.

It belongs to the RbfA family. In terms of assembly, monomer. Binds 30S ribosomal subunits, but not 50S ribosomal subunits or 70S ribosomes.

It localises to the cytoplasm. Its function is as follows. One of several proteins that assist in the late maturation steps of the functional core of the 30S ribosomal subunit. Associates with free 30S ribosomal subunits (but not with 30S subunits that are part of 70S ribosomes or polysomes). Required for efficient processing of 16S rRNA. May interact with the 5'-terminal helix region of 16S rRNA. This is Ribosome-binding factor A from Streptomyces griseus subsp. griseus (strain JCM 4626 / CBS 651.72 / NBRC 13350 / KCC S-0626 / ISP 5235).